We begin with the raw amino-acid sequence, 80 residues long: Putative membrane protein insertion efficiency factor (80 aa).

Residues 61 to 80 (KTGKDPVPDHFSLKRNQEGE) form a disordered region. The segment covering 62–80 (TGKDPVPDHFSLKRNQEGE) has biased composition (basic and acidic residues).

This sequence belongs to the UPF0161 family.

The protein resides in the cell membrane. In terms of biological role, could be involved in insertion of integral membrane proteins into the membrane. In Streptococcus pneumoniae (strain 70585), this protein is Putative membrane protein insertion efficiency factor.